The sequence spans 103 residues: UPF0145 protein BCE_1095 (103 aa).

Belongs to the UPF0145 family.

This chain is UPF0145 protein BCE_1095, found in Bacillus cereus (strain ATCC 10987 / NRS 248).